We begin with the raw amino-acid sequence, 447 residues long: Serine/threonine-protein phosphatase 2A 55 kDa regulatory subunit B gamma isoform (447 aa).

WD repeat units lie at residues 22-61 (TPADIISTVEFNHTGELLATGDKGGRVVIFQREPESKNAP), 87-128 (EIEE…KRPE), 171-209 (GHTYHINSISVNSDCETYMSADDLRINLWHLAITDRSFN), 220-260 (DLTE…LCDK), 279-317 (EIISSVSDVKFSHSGRYMLTRDYLTVKVWDLNMEARPIE), 334-375 (ENDC…DVTL), and 410-446 (DFTKKILHTAWHPAENIIAIAATNNLYIFQDKVNSDM).

This sequence belongs to the phosphatase 2A regulatory subunit B family. As to quaternary structure, PP2A consists of a common heterodimeric core enzyme, composed of a 36 kDa catalytic subunit (subunit C) and a 65 kDa constant regulatory subunit (PR65 or subunit A), that associates with a variety of regulatory subunits. Proteins that associate with the core dimer include three families of regulatory subunits B (the R2/B/PR55/B55, R3/B''/PR72/PR130/PR59 and R5/B'/B56 families), the 48 kDa variable regulatory subunit, viral proteins, and cell signaling molecules. Interacts with IER5.

Functionally, the B regulatory subunit might modulate substrate selectivity and catalytic activity, and might also direct the localization of the catalytic enzyme to a particular subcellular compartment. The polypeptide is Serine/threonine-protein phosphatase 2A 55 kDa regulatory subunit B gamma isoform (PPP2R2C) (Macaca fascicularis (Crab-eating macaque)).